The following is a 64-amino-acid chain: Lantibiotic actagardine (64 aa).

Residues 1-45 (MSALAIEKSWKDVDLRDGATSHPAGLGFGELTFEDLREDRTIYAA) constitute a propeptide that is removed on maturation. Positions 46-51 (SSGWVC) form a cross-link, lanthionine (Ser-Cys). 2 cross-links (beta-methyllanthionine (Thr-Cys)) span residues 52 to 57 (TLTIEC) and 54 to 62 (TIECGTVIC). A cross-link (beta-methyllanthionine sulfoxide (Thr-Cys)) is located at residues 59–64 (TVICAC).

It belongs to the type B lantibiotic family. Maturation of lantibiotics involves the enzymatic conversion of Thr, and Ser into dehydrated AA by the enzyme garM and the formation of thioether bonds with cysteine. The 59-64 beta-methyllanthionine thioether bond is oxidized to a sulfoxide by the monooxygenase GarO. This is followed by membrane translocation and cleavage of the modified precursor. In terms of processing, the sulfoxide group of the 59-64 beta-methyllanthionine thioether bond is mildly important for activity, since the antibacterial activity of deoxyactagardine is marginally lower compared with oxidized actagardine.

Its function is as follows. Has potent antibacterial activity against some Gram-positive bacteria. Has good antistreptococcal activity. Inhibits cell wall biosynthesis by binding to lipid II and blocking transglycosylation. The polypeptide is Lantibiotic actagardine (Actinoplanes garbadinensis).